The sequence spans 657 residues: PAN2-PAN3 deadenylation complex subunit PAN3 (657 aa).

3 disordered regions span residues 1-29 (MASA…HAKD), 52-98 (HDPS…SATI), and 115-135 (SRSN…EWSI). The segment at 27 to 55 (AKDTLCRNVTIYGRCRYEDKGCVFNHDPS) adopts a C3H1-type zinc-finger fold. Basic and acidic residues predominate over residues 52–67 (HDPSRVNDAQHPERSS). Composition is skewed to polar residues over residues 75-98 (DSPS…SATI) and 115-132 (SRSN…STPE). The interval 259–521 (QTLPNSQLPT…TIDIFISGIS (263 aa)) is pseudokinase domain. ATP-binding positions include arginine 311, 360–367 (DYHPLSKT), and 421–422 (SK). The stretch at 522 to 560 (SQLMSTFDSSLHLDDQLISDLSRELENARLVRLLTKLNF) forms a coiled coil. The interval 561–657 (INERPEYEHD…QALLKPARRI (97 aa)) is knob domain.

The protein belongs to the protein kinase superfamily. PAN3 family. Homodimer. Forms a heterotrimer with a catalytic subunit PAN2 to form the poly(A)-nuclease (PAN) deadenylation complex. Interacts (via PAM-2 motif) with poly(A)-binding protein PAB1 (via PABC domain), conferring substrate specificity of the enzyme complex.

It is found in the cytoplasm. In terms of biological role, regulatory subunit of the poly(A)-nuclease (PAN) deadenylation complex, one of two cytoplasmic mRNA deadenylases involved in mRNA turnover. PAN specifically shortens poly(A) tails of RNA and the activity is stimulated by poly(A)-binding protein PAB1. PAN deadenylation is followed by rapid degradation of the shortened mRNA tails by the CCR4-NOT complex. Deadenylated mRNAs are then degraded by two alternative mechanisms, namely exosome-mediated 3'-5' exonucleolytic degradation, or deadenylation-dependent mRNA decaping and subsequent 5'-3' exonucleolytic degradation by XRN1. May also be involved in post-transcriptional maturation of mRNA poly(A) tails. PAN3 acts as a positive regulator for PAN activity, recruiting the catalytic subunit PAN2 to mRNA via its interaction with RNA and with PAB1. The protein is PAN2-PAN3 deadenylation complex subunit PAN3 of Coccidioides immitis (strain RS) (Valley fever fungus).